We begin with the raw amino-acid sequence, 511 residues long: GMP synthase [glutamine-hydrolyzing] (511 aa).

Residues 5–195 enclose the Glutamine amidotransferase type-1 domain; it reads AILVLDFGSQ…VFKICQAQIN (191 aa). Cys-82 acts as the Nucleophile in catalysis. Catalysis depends on residues His-169 and Glu-171. Positions 196 to 386 constitute a GMPS ATP-PPase domain; sequence WSLEGNLETI…LGIKKESLYR (191 aa). An ATP-binding site is contributed by 223–229; the sequence is SGGTDSL.

In terms of assembly, homodimer.

It carries out the reaction XMP + L-glutamine + ATP + H2O = GMP + L-glutamate + AMP + diphosphate + 2 H(+). It functions in the pathway purine metabolism; GMP biosynthesis; GMP from XMP (L-Gln route): step 1/1. Catalyzes the synthesis of GMP from XMP. The chain is GMP synthase [glutamine-hydrolyzing] (guaA) from Borreliella burgdorferi (strain N40) (Borrelia burgdorferi).